Consider the following 250-residue polypeptide: Lymphotoxin-beta (250 aa).

Residues 1-26 (MGAPGLETRAGGPNGKSYLLLASVGA) lie on the Cytoplasmic side of the membrane. A helical; Signal-anchor for type II membrane protein transmembrane segment spans residues 27–47 (AVLGTLLLSVPITVLTVLALM). Residues 48 to 250 (PQEQGGQVAD…KTFFGAVMVG (203 aa)) are Extracellular-facing. In terms of domain architecture, THD spans 87–249 (PAAHLIGIAK…GKTFFGAVMV (163 aa)). N-linked (GlcNAc...) asparagine glycosylation occurs at asparagine 228.

It belongs to the tumor necrosis factor family. As to quaternary structure, heterotrimer of either two LTB and one LTA subunits or (less prevalent) two LTA and one LTB subunits.

It is found in the membrane. In terms of biological role, cytokine that binds to LTBR/TNFRSF3. May play a specific role in immune response regulation. Provides the membrane anchor for the attachment of the heterotrimeric complex to the cell surface. This is Lymphotoxin-beta (LTB) from Notamacropus eugenii (Tammar wallaby).